We begin with the raw amino-acid sequence, 648 residues long: 1-deoxy-D-xylulose-5-phosphate synthase (648 aa).

Thiamine diphosphate-binding positions include His73 and 114–116 (SHA). Residue Asp145 coordinates Mg(2+). Thiamine diphosphate is bound by residues 146–147 (GA), Asn175, Tyr286, and Glu367. Residue Asn175 participates in Mg(2+) binding.

The protein belongs to the transketolase family. DXPS subfamily. As to quaternary structure, homodimer. It depends on Mg(2+) as a cofactor. Requires thiamine diphosphate as cofactor.

It carries out the reaction D-glyceraldehyde 3-phosphate + pyruvate + H(+) = 1-deoxy-D-xylulose 5-phosphate + CO2. The protein operates within metabolic intermediate biosynthesis; 1-deoxy-D-xylulose 5-phosphate biosynthesis; 1-deoxy-D-xylulose 5-phosphate from D-glyceraldehyde 3-phosphate and pyruvate: step 1/1. Catalyzes the acyloin condensation reaction between C atoms 2 and 3 of pyruvate and glyceraldehyde 3-phosphate to yield 1-deoxy-D-xylulose-5-phosphate (DXP). The sequence is that of 1-deoxy-D-xylulose-5-phosphate synthase from Rhodococcus erythropolis (strain PR4 / NBRC 100887).